The following is a 180-amino-acid chain: Shikimate kinase (180 aa).

14–19 (GAGKST) is a binding site for ATP. Ser-18 contributes to the Mg(2+) binding site. 3 residues coordinate substrate: Asp-36, Arg-60, and Gly-82. Arg-120 serves as a coordination point for ATP. A substrate-binding site is contributed by Arg-140. Gln-157 lines the ATP pocket.

The protein belongs to the shikimate kinase family. As to quaternary structure, monomer. Mg(2+) is required as a cofactor.

The protein resides in the cytoplasm. It carries out the reaction shikimate + ATP = 3-phosphoshikimate + ADP + H(+). Its pathway is metabolic intermediate biosynthesis; chorismate biosynthesis; chorismate from D-erythrose 4-phosphate and phosphoenolpyruvate: step 5/7. In terms of biological role, catalyzes the specific phosphorylation of the 3-hydroxyl group of shikimic acid using ATP as a cosubstrate. This chain is Shikimate kinase, found in Haemophilus influenzae (strain PittGG).